A 159-amino-acid polypeptide reads, in one-letter code: MNILGIDPGSRNLGYCILHWDGKKFSLVEAGLLKIKTKELQEQIVELVEGIDIILKAHQIDEVAIEDIFFAYNPQSVLKLAQFRGALSLKILQEIGYFYEYTPLQVKKAVTGNGKATKEQVAFMVKRLLGIKKEIKPLDITDAMAIAITHLQRVKMRKK.

Residues Asp-7, Glu-66, and Asp-139 contribute to the active site. Asp-7, Glu-66, and Asp-139 together coordinate Mg(2+).

It belongs to the RuvC family. Homodimer which binds Holliday junction (HJ) DNA. The HJ becomes 2-fold symmetrical on binding to RuvC with unstacked arms; it has a different conformation from HJ DNA in complex with RuvA. In the full resolvosome a probable DNA-RuvA(4)-RuvB(12)-RuvC(2) complex forms which resolves the HJ. It depends on Mg(2+) as a cofactor.

Its subcellular location is the cytoplasm. The catalysed reaction is Endonucleolytic cleavage at a junction such as a reciprocal single-stranded crossover between two homologous DNA duplexes (Holliday junction).. In terms of biological role, the RuvA-RuvB-RuvC complex processes Holliday junction (HJ) DNA during genetic recombination and DNA repair. Endonuclease that resolves HJ intermediates. Cleaves cruciform DNA by making single-stranded nicks across the HJ at symmetrical positions within the homologous arms, yielding a 5'-phosphate and a 3'-hydroxyl group; requires a central core of homology in the junction. The consensus cleavage sequence is 5'-(A/T)TT(C/G)-3'. Cleavage occurs on the 3'-side of the TT dinucleotide at the point of strand exchange. HJ branch migration catalyzed by RuvA-RuvB allows RuvC to scan DNA until it finds its consensus sequence, where it cleaves and resolves the cruciform DNA. In Sulfurovum sp. (strain NBC37-1), this protein is Crossover junction endodeoxyribonuclease RuvC.